A 1001-amino-acid chain; its full sequence is 2-oxoglutarate dehydrogenase E1 component (1001 aa).

Belongs to the alpha-ketoglutarate dehydrogenase family. Homodimer. Part of the 2-oxoglutarate dehydrogenase (OGDH) complex composed of E1 (2-oxoglutarate dehydrogenase), E2 (dihydrolipoamide succinyltransferase) and E3 (dihydrolipoamide dehydrogenase); the complex contains multiple copies of the three enzymatic components (E1, E2 and E3). It depends on thiamine diphosphate as a cofactor.

The catalysed reaction is N(6)-[(R)-lipoyl]-L-lysyl-[protein] + 2-oxoglutarate + H(+) = N(6)-[(R)-S(8)-succinyldihydrolipoyl]-L-lysyl-[protein] + CO2. E1 component of the 2-oxoglutarate dehydrogenase (OGDH) complex which catalyzes the decarboxylation of 2-oxoglutarate, the first step in the conversion of 2-oxoglutarate to succinyl-CoA and CO(2). This is 2-oxoglutarate dehydrogenase E1 component from Brucella anthropi (strain ATCC 49188 / DSM 6882 / CCUG 24695 / JCM 21032 / LMG 3331 / NBRC 15819 / NCTC 12168 / Alc 37) (Ochrobactrum anthropi).